Reading from the N-terminus, the 502-residue chain is Betaine aldehyde dehydrogenase, chloroplastic (502 aa).

The N-terminal 7 residues, 1–7 (MAFPIPA), are a transit peptide targeting the chloroplast. Position 240–245 (240–245 (GSSATG)) interacts with NAD(+). Residue Glu262 is the Proton acceptor of the active site. Cys296 functions as the Nucleophile in the catalytic mechanism.

The protein belongs to the aldehyde dehydrogenase family. As to quaternary structure, homodimer.

It is found in the plastid. Its subcellular location is the chloroplast. It carries out the reaction betaine aldehyde + NAD(+) + H2O = glycine betaine + NADH + 2 H(+). The protein operates within amine and polyamine biosynthesis; betaine biosynthesis via choline pathway; betaine from betaine aldehyde: step 1/1. This Atriplex hortensis (Mountain spinach) protein is Betaine aldehyde dehydrogenase, chloroplastic.